We begin with the raw amino-acid sequence, 137 residues long: Large-conductance mechanosensitive channel (137 aa).

3 helical membrane-spanning segments follow: residues 15–35, 38–58, and 80–100; these read VDLAIGVIIGGAFGGLVNSIV, IIMPIIGLITGGIDFSNMFIQ, and GNFVTLLINFLIIAWVLFLVV.

Belongs to the MscL family. Homopentamer.

It localises to the cell inner membrane. In terms of biological role, channel that opens in response to stretch forces in the membrane lipid bilayer. May participate in the regulation of osmotic pressure changes within the cell. This is Large-conductance mechanosensitive channel from Brucella anthropi (strain ATCC 49188 / DSM 6882 / CCUG 24695 / JCM 21032 / LMG 3331 / NBRC 15819 / NCTC 12168 / Alc 37) (Ochrobactrum anthropi).